Reading from the N-terminus, the 203-residue chain is Protein GrpE (203 aa).

Positions 1 to 10 (MSNESIKAEQ) are enriched in basic and acidic residues. Residues 1 to 20 (MSNESIKAEQDLIQEGVESE) are disordered.

It belongs to the GrpE family. Homodimer.

It is found in the cytoplasm. Functionally, participates actively in the response to hyperosmotic and heat shock by preventing the aggregation of stress-denatured proteins, in association with DnaK and GrpE. It is the nucleotide exchange factor for DnaK and may function as a thermosensor. Unfolded proteins bind initially to DnaJ; upon interaction with the DnaJ-bound protein, DnaK hydrolyzes its bound ATP, resulting in the formation of a stable complex. GrpE releases ADP from DnaK; ATP binding to DnaK triggers the release of the substrate protein, thus completing the reaction cycle. Several rounds of ATP-dependent interactions between DnaJ, DnaK and GrpE are required for fully efficient folding. The sequence is that of Protein GrpE from Shewanella sp. (strain MR-4).